The primary structure comprises 515 residues: Bifunctional purine biosynthesis protein PurH (515 aa).

The region spanning 1–145 is the MGS-like domain; it reads MTKRVLISVS…KNHASVTVVV (145 aa).

This sequence belongs to the PurH family.

It carries out the reaction (6R)-10-formyltetrahydrofolate + 5-amino-1-(5-phospho-beta-D-ribosyl)imidazole-4-carboxamide = 5-formamido-1-(5-phospho-D-ribosyl)imidazole-4-carboxamide + (6S)-5,6,7,8-tetrahydrofolate. The catalysed reaction is IMP + H2O = 5-formamido-1-(5-phospho-D-ribosyl)imidazole-4-carboxamide. The protein operates within purine metabolism; IMP biosynthesis via de novo pathway; 5-formamido-1-(5-phospho-D-ribosyl)imidazole-4-carboxamide from 5-amino-1-(5-phospho-D-ribosyl)imidazole-4-carboxamide (10-formyl THF route): step 1/1. It participates in purine metabolism; IMP biosynthesis via de novo pathway; IMP from 5-formamido-1-(5-phospho-D-ribosyl)imidazole-4-carboxamide: step 1/1. This chain is Bifunctional purine biosynthesis protein PurH, found in Streptococcus pneumoniae serotype 19F (strain G54).